Reading from the N-terminus, the 416-residue chain is Putative competence-damage inducible protein (416 aa).

This sequence belongs to the CinA family.

In Bacillus subtilis (strain 168), this protein is Putative competence-damage inducible protein.